The primary structure comprises 116 residues: Large ribosomal subunit protein uL18 (116 aa).

This sequence belongs to the universal ribosomal protein uL18 family. Part of the 50S ribosomal subunit; part of the 5S rRNA/L5/L18/L25 subcomplex. Contacts the 5S and 23S rRNAs.

In terms of biological role, this is one of the proteins that bind and probably mediate the attachment of the 5S RNA into the large ribosomal subunit, where it forms part of the central protuberance. This Acinetobacter baylyi (strain ATCC 33305 / BD413 / ADP1) protein is Large ribosomal subunit protein uL18.